Here is a 594-residue protein sequence, read N- to C-terminus: UvrABC system protein C (594 aa).

Residues 14–91 (DQPGCYLMKD…IKKYDPKYNI (78 aa)) form the GIY-YIG domain. A UVR domain is found at 196-231 (KEVRSELEIKMYEASEKLEFERAKELRDQIAHIDAI).

Belongs to the UvrC family. As to quaternary structure, interacts with UvrB in an incision complex.

Its subcellular location is the cytoplasm. Its function is as follows. The UvrABC repair system catalyzes the recognition and processing of DNA lesions. UvrC both incises the 5' and 3' sides of the lesion. The N-terminal half is responsible for the 3' incision and the C-terminal half is responsible for the 5' incision. The polypeptide is UvrABC system protein C (Bacillus cereus (strain B4264)).